The chain runs to 305 residues: Ribosomal RNA small subunit methyltransferase H (305 aa).

S-adenosyl-L-methionine-binding positions include 46–48 (GGH), Asp-65, Phe-92, Asp-108, and His-115.

It belongs to the methyltransferase superfamily. RsmH family.

Its subcellular location is the cytoplasm. It catalyses the reaction cytidine(1402) in 16S rRNA + S-adenosyl-L-methionine = N(4)-methylcytidine(1402) in 16S rRNA + S-adenosyl-L-homocysteine + H(+). Specifically methylates the N4 position of cytidine in position 1402 (C1402) of 16S rRNA. The polypeptide is Ribosomal RNA small subunit methyltransferase H (Trichormus variabilis (strain ATCC 29413 / PCC 7937) (Anabaena variabilis)).